The primary structure comprises 185 residues: Ribosome-recycling factor (185 aa).

It belongs to the RRF family.

Its subcellular location is the cytoplasm. Its function is as follows. Responsible for the release of ribosomes from messenger RNA at the termination of protein biosynthesis. May increase the efficiency of translation by recycling ribosomes from one round of translation to another. This chain is Ribosome-recycling factor, found in Syntrophus aciditrophicus (strain SB).